A 175-amino-acid chain; its full sequence is Bifunctional protein PyrR (175 aa).

Residues 97 to 109 (IVLIDDVLFTGRT) carry the PRPP-binding motif.

It belongs to the purine/pyrimidine phosphoribosyltransferase family. PyrR subfamily. Homodimer and homohexamer; in equilibrium.

It carries out the reaction UMP + diphosphate = 5-phospho-alpha-D-ribose 1-diphosphate + uracil. Functionally, regulates transcriptional attenuation of the pyrimidine nucleotide (pyr) operon by binding in a uridine-dependent manner to specific sites on pyr mRNA. This disrupts an antiterminator hairpin in the RNA and favors formation of a downstream transcription terminator, leading to a reduced expression of downstream genes. Its function is as follows. Also displays a weak uracil phosphoribosyltransferase activity which is not physiologically significant. This is Bifunctional protein PyrR from Leuconostoc citreum (strain KM20).